The following is a 521-amino-acid chain: MAKAATPKTTAAAEAKPAAKAPAKKAAPKTTAAAKPAATKSGAPKAAAAGAIGHITQVIGAVVDVKFPEGQLPLILNALEVDNQGHRLVLEVAQHLGEDTVRTIAMDATEGLVRGQEARDTGEPIMVPVGVETLGRIMNVIGEPVDEAGPIKTKATRAIHQNAPEYIEQSTEAEILVTGIKVVDLLAPYAKGGKIGLFGGAGVGKTVLIMELINNVAKAHGGYSVFAGVGERTREGNDLYHEMIESGVNKLGGGEGSKAALVYGQMNEPPGARARVALSGLTVAENFRDQGQDVLFFVDNIFRFTQAGSEVSALLGRIPSAVGYQPTLATDMGAMQERITTTTKGSITSVQAIYVPADDLTDPAPATSFAHLDATTVLSRSIAEKGIYPAVDPLDSTSRMIDPKVVGEEHYAVARQVQSILQRYKALQDIIAILGMDELSEEDKLTVARARKIERFLSQPFFVAEVFTGSPGKLVDLADTIKGFKGLCAGDYDHLPEAAFYMVGSIEEALEKAKKLAAEAA.

Composition is skewed to low complexity over residues 1–21 (MAKA…AAKA) and 28–42 (PKTT…TKSG). The segment at 1-42 (MAKAATPKTTAAAEAKPAAKAPAKKAAPKTTAAAKPAATKSG) is disordered. 199–206 (GGAGVGKT) lines the ATP pocket.

The protein belongs to the ATPase alpha/beta chains family. As to quaternary structure, F-type ATPases have 2 components, CF(1) - the catalytic core - and CF(0) - the membrane proton channel. CF(1) has five subunits: alpha(3), beta(3), gamma(1), delta(1), epsilon(1). CF(0) has three main subunits: a(1), b(2) and c(9-12). The alpha and beta chains form an alternating ring which encloses part of the gamma chain. CF(1) is attached to CF(0) by a central stalk formed by the gamma and epsilon chains, while a peripheral stalk is formed by the delta and b chains.

Its subcellular location is the cell inner membrane. The catalysed reaction is ATP + H2O + 4 H(+)(in) = ADP + phosphate + 5 H(+)(out). Produces ATP from ADP in the presence of a proton gradient across the membrane. The catalytic sites are hosted primarily by the beta subunits. The protein is ATP synthase subunit beta of Brucella abortus (strain 2308).